Consider the following 264-residue polypeptide: Hydroxyethylthiazole kinase (264 aa).

Residue Met-52 participates in substrate binding. Residues Arg-127 and Thr-173 each contribute to the ATP site. Residue Gly-200 participates in substrate binding.

Belongs to the Thz kinase family. It depends on Mg(2+) as a cofactor.

It catalyses the reaction 5-(2-hydroxyethyl)-4-methylthiazole + ATP = 4-methyl-5-(2-phosphooxyethyl)-thiazole + ADP + H(+). The protein operates within cofactor biosynthesis; thiamine diphosphate biosynthesis; 4-methyl-5-(2-phosphoethyl)-thiazole from 5-(2-hydroxyethyl)-4-methylthiazole: step 1/1. Its function is as follows. Catalyzes the phosphorylation of the hydroxyl group of 4-methyl-5-beta-hydroxyethylthiazole (THZ). The sequence is that of Hydroxyethylthiazole kinase from Pectobacterium carotovorum subsp. carotovorum (strain PC1).